Consider the following 235-residue polypeptide: Small ribosomal subunit protein uS2c (235 aa).

This sequence belongs to the universal ribosomal protein uS2 family.

It is found in the plastid. The chain is Small ribosomal subunit protein uS2c (rps2) from Euglena longa (Euglenophycean alga).